The following is a 434-amino-acid chain: Septin-7 (434 aa).

Tyr-27 bears the Phosphotyrosine mark. A Septin-type G domain is found at 44 to 313 (RGFEFTLMVV…ENYRSRKLAA (270 aa)). Residues 44-314 (RGFEFTLMVV…NYRSRKLAAV (271 aa)) form an interaction with SEPTIN12 region. A G1 motif region spans residues 54–61 (GESGLGKS). 54–61 (GESGLGKS) is a binding site for GTP. Ser-74 carries the post-translational modification Phosphoserine. Residues Thr-87, Gly-113, and 192 to 200 (KADTLTPEE) each bind GTP. The tract at residues 110–113 (DTPG) is G3 motif. Residues 191–194 (AKAD) are G4 motif. Thr-225 bears the Phosphothreonine mark. Residues Gly-247 and Arg-262 each coordinate GTP. A coiled-coil region spans residues 329-434 (TKSPLAQMEE…EKNKKKGKIF (106 aa)). Residue Ser-331 is modified to Phosphoserine. Lys-370 is subject to N6-acetyllysine. A compositionally biased stretch (basic and acidic residues) spans 377–407 (QRRHEQMKKNLEAQHKGLEEKRRQFEDEKAN). The segment at 377 to 434 (QRRHEQMKKNLEAQHKGLEEKRRQFEDEKANWEAQQRILEQQNSSRTLEKNKKKGKIF) is disordered. Ser-421 carries the post-translational modification Phosphoserine. At Thr-423 the chain carries Phosphothreonine.

It belongs to the TRAFAC class TrmE-Era-EngA-EngB-Septin-like GTPase superfamily. Septin GTPase family. Septins polymerize into heterooligomeric protein complexes that form filaments, and associate with cellular membranes, actin filaments and microtubules. GTPase activity is required for filament formation. Filaments are assembled from asymmetrical heterotrimers, composed of SEPTIN2, SEPTIN6 and SEPTIN7 that associate head-to-head to form a hexameric unit. Within the trimer, directly interacts with SEPTIN6, while interaction with SEPTIN2 seems indirect. In the absence of SEPTIN6, forms homodimers. Interacts directly with CENPE and links CENPE to septin filaments composed of SEPTIN2, SEPTIN6 and SEPTIN7. Interacts with SEPTIN5, SEPTIN8, SEPTIN9 and SEPTIN11. Component of a septin core octameric complex consisting of SEPTIN12, SEPTIN7, SEPTIN6 and SEPTIN2 or SEPTIN4 in the order 12-7-6-2-2-6-7-12 or 12-7-6-4-4-6-7-12 and located in the sperm annulus; the SEPTIN12:SEPTIN7 association is mediated by the respective GTP-binding domains.

The protein resides in the cytoplasm. Its subcellular location is the chromosome. It is found in the centromere. The protein localises to the kinetochore. It localises to the cytoskeleton. The protein resides in the spindle. Its subcellular location is the cleavage furrow. It is found in the midbody. The protein localises to the cilium axoneme. It localises to the cell projection. The protein resides in the cilium. Its subcellular location is the flagellum. Functionally, filament-forming cytoskeletal GTPase. Required for normal organization of the actin cytoskeleton. Required for normal progress through mitosis. Involved in cytokinesis. Required for normal association of CENPE with the kinetochore. Plays a role in ciliogenesis and collective cell movements. Forms a filamentous structure with SEPTIN12, SEPTIN6, SEPTIN2 and probably SEPTIN4 at the sperm annulus which is required for the structural integrity and motility of the sperm tail during postmeiotic differentiation. In Pan troglodytes (Chimpanzee), this protein is Septin-7.